We begin with the raw amino-acid sequence, 488 residues long: F-box protein At3g60790 (488 aa).

Residues 1–21 (MTTQSSSSSSSLPSSLSSTPP) form a disordered region. An F-box domain is found at 49-95 (VDRISMLPDEMLQKILSTLSTKDAVITSTLSKRWVDQWKRIPHLCVD).

The polypeptide is F-box protein At3g60790 (Arabidopsis thaliana (Mouse-ear cress)).